Reading from the N-terminus, the 182-residue chain is Proline-rich protein, Y-linked (182 aa).

2 disordered regions span residues Met1–Asp22 and Val89–Gly108. Positions Ala91–Gly108 are enriched in pro residues. In terms of domain architecture, DUF1725 spans Trp154–Gln167.

This Homo sapiens (Human) protein is Proline-rich protein, Y-linked (PRORY).